We begin with the raw amino-acid sequence, 382 residues long: uncharacterized protein (382 aa).

The next 12 membrane-spanning stretches (helical) occupy residues 14–34 (GLLL…LWLA), 45–65 (MVSS…GYLI), 79–99 (LVFA…SWMA), 102–122 (FVAG…LMCS), 131–151 (LLAA…LLVS), 157–177 (LMNV…PLLF), 204–224 (LGVN…GLMP), 236–256 (NIGF…WPIG), 265–285 (LLVL…MLTH), 289–309 (APAL…AMAW), 325–345 (ALLL…AMLM), and 349–369 (SDNL…LMLL).

It belongs to the major facilitator superfamily. YcaD (TC 2.A.1.26) family.

The protein localises to the cell inner membrane. This is an uncharacterized protein from Escherichia fergusonii (strain ATCC 35469 / DSM 13698 / CCUG 18766 / IAM 14443 / JCM 21226 / LMG 7866 / NBRC 102419 / NCTC 12128 / CDC 0568-73).